The sequence spans 66 residues: MIVPIRCFTCGKPLGHLYITFKHRVLAGEHPGRVLDELGVHRYCCRRTLIAHVEWIDDLLVYEKRS.

4 residues coordinate Zn(2+): Cys-7, Cys-10, Cys-44, and Cys-45.

This sequence belongs to the archaeal Rpo10/eukaryotic RPB10 RNA polymerase subunit family. Part of the RNA polymerase complex. Zn(2+) serves as cofactor.

Its subcellular location is the cytoplasm. It catalyses the reaction RNA(n) + a ribonucleoside 5'-triphosphate = RNA(n+1) + diphosphate. Functionally, DNA-dependent RNA polymerase (RNAP) catalyzes the transcription of DNA into RNA using the four ribonucleoside triphosphates as substrates. The chain is DNA-directed RNA polymerase subunit Rpo10 from Pyrobaculum islandicum (strain DSM 4184 / JCM 9189 / GEO3).